Consider the following 475-residue polypeptide: Ribulose bisphosphate carboxylase large chain (475 aa).

The propeptide occupies 1–2 (MS). At P3 the chain carries N-acetylproline. An N6,N6,N6-trimethyllysine modification is found at K14. Substrate contacts are provided by N123 and T173. K175 acts as the Proton acceptor in catalysis. Residue K177 coordinates substrate. K201, D203, and E204 together coordinate Mg(2+). An N6-carboxylysine modification is found at K201. Catalysis depends on H294, which acts as the Proton acceptor. Substrate is bound by residues R295, H327, and S379.

Belongs to the RuBisCO large chain family. Type I subfamily. Heterohexadecamer of 8 large chains and 8 small chains; disulfide-linked. The disulfide link is formed within the large subunit homodimers. It depends on Mg(2+) as a cofactor. In terms of processing, the disulfide bond which can form in the large chain dimeric partners within the hexadecamer appears to be associated with oxidative stress and protein turnover.

The protein resides in the plastid. The protein localises to the chloroplast. The enzyme catalyses 2 (2R)-3-phosphoglycerate + 2 H(+) = D-ribulose 1,5-bisphosphate + CO2 + H2O. The catalysed reaction is D-ribulose 1,5-bisphosphate + O2 = 2-phosphoglycolate + (2R)-3-phosphoglycerate + 2 H(+). Functionally, ruBisCO catalyzes two reactions: the carboxylation of D-ribulose 1,5-bisphosphate, the primary event in carbon dioxide fixation, as well as the oxidative fragmentation of the pentose substrate in the photorespiration process. Both reactions occur simultaneously and in competition at the same active site. The polypeptide is Ribulose bisphosphate carboxylase large chain (Citrus sinensis (Sweet orange)).